A 776-amino-acid polypeptide reads, in one-letter code: Palmitoyltransferase AKR1 (776 aa).

The Cytoplasmic portion of the chain corresponds to 1–311 (MDQEMTTVAS…MEGKLGPRNT (311 aa)). Positions 38–58 (RLDEGSSIRGGELERDSQEVG) are disordered. 6 ANK repeats span residues 68–97 (CHDLDIHALAQRGDTAAIAAMLQENPSLNL), 103–132 (QDVTPLHWAAINAHMGTCRLLIDSGADIDA), 137–166 (LKATPLQWAARNGHLYVVHLLISRGADPNI), 170–199 (QGFNTLHLITHSSAVMPLLYMLHQPVAIDE), 203–232 (DGHTALMWAAYQGDALSVDLLIRHGASVNS), and 236–265 (AGMTPLHWAAVKGNKVSIMHLVEAGASLDA). A helical transmembrane segment spans residues 312-332 (ILAIFLLPIAVLWLIFSTFKW). The Lumenal segment spans residues 333–336 (LPVY). A helical membrane pass occupies residues 337–357 (VGVPFAIAEFMGMQYTVVLVL). At 358 to 368 (LGHIKAQDKVS) the chain is on the cytoplasmic side. A helical transmembrane segment spans residues 369–389 (TSNYFASIITASLIWVGYCWI). The Lumenal segment spans residues 390–402 (SRFAVNTPGYAFS). A helical membrane pass occupies residues 403 to 423 (NLGFIIMFVGCCWTFWTAIVT). The Cytoplasmic portion of the chain corresponds to 424 to 498 (DPGFVPKGQQ…NCVGAKNHRS (75 aa)). The 51-residue stretch at 454–504 (NFCIVCMARKPLRSKHCRTCNRCVARFDHHCPWIWNCVGAKNHRSFLLFVL) folds into the DHHC domain. The active-site S-palmitoyl cysteine intermediate is the Cys484. A helical transmembrane segment spans residues 499–519 (FLLFVLFLIGGIILFIRLTIA). At 520–553 (YIQQNAPEYIPTPNPGLTTCDISTTLCQAGDFDP) the chain is on the lumenal side. A helical membrane pass occupies residues 554 to 574 (FLLCMALWSTLQLTWTSVLAI). The Cytoplasmic segment spans residues 575–776 (SHLWQVSRQM…RYEVVSEQEV (202 aa)). The disordered stretch occupies residues 628 to 665 (GAGEEAAGPPGAEAGPEGNALLPPPGGHVHGPQCRHGD). The segment covering 629–645 (AGEEAAGPPGAEAGPEG) has biased composition (low complexity).

This sequence belongs to the DHHC palmitoyltransferase family. AKR/ZDHHC17 subfamily.

Its subcellular location is the early endosome membrane. The protein resides in the golgi apparatus membrane. The catalysed reaction is L-cysteinyl-[protein] + hexadecanoyl-CoA = S-hexadecanoyl-L-cysteinyl-[protein] + CoA. In terms of biological role, palmitoyltransferase specific for casein kinase 1. The protein is Palmitoyltransferase AKR1 (AKR1) of Cryptococcus neoformans var. neoformans serotype D (strain B-3501A) (Filobasidiella neoformans).